We begin with the raw amino-acid sequence, 362 residues long: Microfibril-associated glycoprotein 3 (362 aa).

The signal sequence occupies residues 1–19 (MKLHCCLFTLVASIIVPAA). At 20–146 (FVLEDVDFNQ…TLRVIFTSGD (127 aa)) the chain is on the extracellular side. Residues Asn36, Asn41, and Asn110 are each glycosylated (N-linked (GlcNAc...) asparagine). Residues 45–137 (PSSFELSASS…SPIRASYSVT (93 aa)) enclose the Ig-like C2-type domain. Cys73 and Cys124 are oxidised to a cystine. Residues 147–167 (MSVYYMIVCLIAFTITLILNV) traverse the membrane as a helical segment. Residues 168-362 (TRLCMMSSHL…KDGAYENSQL (195 aa)) lie on the Cytoplasmic side of the membrane. Disordered stretches follow at residues 282-306 (GIYVINPEMGRSNSPGGDSDDGSLN) and 319-362 (HLQS…NSQL). Polar residues predominate over residues 319–337 (HLQSETKSIDTESQGSSHF).

Post-translationally, glycosylated.

The protein resides in the cell membrane. Its function is as follows. Component of the elastin-associated microfibrils. The chain is Microfibril-associated glycoprotein 3 (MFAP3) from Pongo abelii (Sumatran orangutan).